The primary structure comprises 66 residues: ATP synthase subunit c (66 aa).

2 helical membrane-spanning segments follow: residues 3–23 (LTFLGLCIACMGVSVGEGLLM) and 45–65 (FLGVAFIEGTFFVTLVFSFII).

This sequence belongs to the ATPase C chain family. As to quaternary structure, F-type ATPases have 2 components, F(1) - the catalytic core - and F(0) - the membrane proton channel. F(1) has five subunits: alpha(3), beta(3), gamma(1), delta(1), epsilon(1). F(0) has three main subunits: a(1), b(2) and c(10-14). The alpha and beta chains form an alternating ring which encloses part of the gamma chain. F(1) is attached to F(0) by a central stalk formed by the gamma and epsilon chains, while a peripheral stalk is formed by the delta and b chains.

The protein localises to the cell membrane. In terms of biological role, f(1)F(0) ATP synthase produces ATP from ADP in the presence of a proton or sodium gradient. F-type ATPases consist of two structural domains, F(1) containing the extramembraneous catalytic core and F(0) containing the membrane proton channel, linked together by a central stalk and a peripheral stalk. During catalysis, ATP synthesis in the catalytic domain of F(1) is coupled via a rotary mechanism of the central stalk subunits to proton translocation. Functionally, key component of the F(0) channel; it plays a direct role in translocation across the membrane. A homomeric c-ring of between 10-14 subunits forms the central stalk rotor element with the F(1) delta and epsilon subunits. The polypeptide is ATP synthase subunit c (Streptococcus pneumoniae serotype 19F (strain G54)).